The sequence spans 387 residues: uncharacterized protein (387 aa).

This sequence belongs to the geranylgeranyl reductase family. ChlP subfamily.

This is an uncharacterized protein from Methanocaldococcus jannaschii (strain ATCC 43067 / DSM 2661 / JAL-1 / JCM 10045 / NBRC 100440) (Methanococcus jannaschii).